Here is a 196-residue protein sequence, read N- to C-terminus: Elongation factor Ts (196 aa).

The involved in Mg(2+) ion dislocation from EF-Tu stretch occupies residues 80–83 (TDFV).

It belongs to the EF-Ts family.

The protein resides in the cytoplasm. Associates with the EF-Tu.GDP complex and induces the exchange of GDP to GTP. It remains bound to the aminoacyl-tRNA.EF-Tu.GTP complex up to the GTP hydrolysis stage on the ribosome. The protein is Elongation factor Ts of Desulfotalea psychrophila (strain LSv54 / DSM 12343).